A 355-amino-acid chain; its full sequence is Chorismate synthase (355 aa).

Arg-46 contributes to the NADP(+) binding site. FMN-binding positions include 123–125 (RAS), 233–234 (NG), Gly-273, 288–292 (KPTPS), and Arg-314.

This sequence belongs to the chorismate synthase family. Homotetramer. Requires FMNH2 as cofactor.

It catalyses the reaction 5-O-(1-carboxyvinyl)-3-phosphoshikimate = chorismate + phosphate. The protein operates within metabolic intermediate biosynthesis; chorismate biosynthesis; chorismate from D-erythrose 4-phosphate and phosphoenolpyruvate: step 7/7. Functionally, catalyzes the anti-1,4-elimination of the C-3 phosphate and the C-6 proR hydrogen from 5-enolpyruvylshikimate-3-phosphate (EPSP) to yield chorismate, which is the branch point compound that serves as the starting substrate for the three terminal pathways of aromatic amino acid biosynthesis. This reaction introduces a second double bond into the aromatic ring system. This chain is Chorismate synthase, found in Campylobacter concisus (strain 13826).